Reading from the N-terminus, the 129-residue chain is Glycine cleavage system H protein (129 aa).

Residues 22-103 enclose the Lipoyl-binding domain; sequence TGTVGITDYA…AHTAWIMKIE (82 aa). The residue at position 63 (Lys-63) is an N6-lipoyllysine.

Belongs to the GcvH family. In terms of assembly, the glycine cleavage system is composed of four proteins: P, T, L and H. The cofactor is (R)-lipoate.

Its function is as follows. The glycine cleavage system catalyzes the degradation of glycine. The H protein shuttles the methylamine group of glycine from the P protein to the T protein. This is Glycine cleavage system H protein from Acidobacterium capsulatum (strain ATCC 51196 / DSM 11244 / BCRC 80197 / JCM 7670 / NBRC 15755 / NCIMB 13165 / 161).